Reading from the N-terminus, the 475-residue chain is Aspartyl/glutamyl-tRNA(Asn/Gln) amidotransferase subunit B (475 aa).

It belongs to the GatB/GatE family. GatB subfamily. As to quaternary structure, heterotrimer of A, B and C subunits.

The catalysed reaction is L-glutamyl-tRNA(Gln) + L-glutamine + ATP + H2O = L-glutaminyl-tRNA(Gln) + L-glutamate + ADP + phosphate + H(+). It catalyses the reaction L-aspartyl-tRNA(Asn) + L-glutamine + ATP + H2O = L-asparaginyl-tRNA(Asn) + L-glutamate + ADP + phosphate + 2 H(+). Its function is as follows. Allows the formation of correctly charged Asn-tRNA(Asn) or Gln-tRNA(Gln) through the transamidation of misacylated Asp-tRNA(Asn) or Glu-tRNA(Gln) in organisms which lack either or both of asparaginyl-tRNA or glutaminyl-tRNA synthetases. The reaction takes place in the presence of glutamine and ATP through an activated phospho-Asp-tRNA(Asn) or phospho-Glu-tRNA(Gln). In Staphylococcus aureus (strain MRSA252), this protein is Aspartyl/glutamyl-tRNA(Asn/Gln) amidotransferase subunit B.